We begin with the raw amino-acid sequence, 750 residues long: Methylmalonyl-CoA mutase, mitochondrial (750 aa).

Residues 1-32 constitute a mitochondrion transit peptide; the sequence is MLRAKNQLFLLSPHYLRQVKESSGSRLIQQRL. A malonyl-CoA-binding site is contributed by Gln50. Residue Lys89 is modified to N6-acetyllysine. Residues 96-99 and 106-110 contribute to the malonyl-CoA site; these read YPTM and TIRQY. Lys212 bears the N6-acetyllysine mark. Residues 216–218, Arg228, Lys255, His265, and 304–306 contribute to the malonyl-CoA site; these read TIQ and RLS. Lys335 is subject to N6-acetyllysine. At Lys343 the chain carries N6-succinyllysine. At Ser481 the chain carries Phosphoserine. The residue at position 595 (Lys595) is an N6-succinyllysine. At Lys602 the chain carries N6-acetyllysine. The region spanning 614-746 is the B12-binding domain; sequence RPRLLVAKMG…DDIEKCLEKK (133 aa). Residue His627 coordinates adenosylcob(III)alamin.

This sequence belongs to the methylmalonyl-CoA mutase family. Homodimer. Interacts (the apoenzyme form) with MMAA; the interaction is GTP dependent. Adenosylcob(III)alamin is required as a cofactor.

It is found in the mitochondrion matrix. Its subcellular location is the mitochondrion. The protein resides in the cytoplasm. It carries out the reaction (R)-methylmalonyl-CoA = succinyl-CoA. With respect to regulation, inhibited by itaconyl-CoA, a metabolite that inactivates the coenzyme B12 cofactor. Its function is as follows. Catalyzes the reversible isomerization of methylmalonyl-CoA (MMCoA) (generated from branched-chain amino acid metabolism and degradation of dietary odd chain fatty acids and cholesterol) to succinyl-CoA (3-carboxypropionyl-CoA), a key intermediate of the tricarboxylic acid cycle. This is Methylmalonyl-CoA mutase, mitochondrial (MMUT) from Bos taurus (Bovine).